A 589-amino-acid polypeptide reads, in one-letter code: Inactive poly [ADP-ribose] polymerase RCD1 (589 aa).

Residues 64 to 153 (KLSAYENRSG…ETGAKTPLAW (90 aa)) enclose the WWE domain. The PARP catalytic domain maps to 248–469 (EAAVSKWDET…LIAKRDNSGV (222 aa)). 2 disordered regions span residues 464–504 (RDNS…TRPK) and 569–589 (QPKS…AGGL). A compositionally biased stretch (polar residues) spans 481-503 (LESNQGARGSGSANSVGSSTTRP). The RST domain occupies 501 to 572 (TRPKSPWMPF…ITTLQNQPKS (72 aa)). Over residues 571-589 (KSKEIPGSIRDHEEGAGGL) the composition is skewed to basic and acidic residues.

Interacts with the transcription factors NAC013/NTL1 and NAC046. Interacts with dehydration-responsive DREB2 proteins and a number of transcription factors belonging to several protein families. Interacts with turnip crinkle virus (TCV) movement protein P8. Expressed in young developing tissues, such as young leaves and flowers and root tips. In mature plants, expressed in vasculature of leaves and roots, and guard cells.

The protein localises to the nucleus matrix. Functionally, inactive ADP-ribosyltransferase that functions with SRO1 to regulate oxidative stress, hormonal and developmental responses. Required for embryogenesis, vegetative and reproductive development, and abiotic stress responses. May regulate several stress-responsive genes. Seems to play a larger developmental role than SRO1. Does not bind NAD in vitro. This chain is Inactive poly [ADP-ribose] polymerase RCD1 (RCD1), found in Arabidopsis thaliana (Mouse-ear cress).